Here is a 223-residue protein sequence, read N- to C-terminus: NADH-quinone oxidoreductase subunit C (223 aa).

The protein belongs to the complex I 30 kDa subunit family. In terms of assembly, NDH-1 is composed of 14 different subunits. Subunits NuoB, C, D, E, F, and G constitute the peripheral sector of the complex.

The protein localises to the cell inner membrane. The enzyme catalyses a quinone + NADH + 5 H(+)(in) = a quinol + NAD(+) + 4 H(+)(out). Functionally, NDH-1 shuttles electrons from NADH, via FMN and iron-sulfur (Fe-S) centers, to quinones in the respiratory chain. The immediate electron acceptor for the enzyme in this species is believed to be ubiquinone. Couples the redox reaction to proton translocation (for every two electrons transferred, four hydrogen ions are translocated across the cytoplasmic membrane), and thus conserves the redox energy in a proton gradient. The polypeptide is NADH-quinone oxidoreductase subunit C (Hydrogenovibrio crunogenus (strain DSM 25203 / XCL-2) (Thiomicrospira crunogena)).